Here is a 76-residue protein sequence, read N- to C-terminus: Putative membrane protein insertion efficiency factor (76 aa).

It belongs to the UPF0161 family.

Its subcellular location is the cell inner membrane. Could be involved in insertion of integral membrane proteins into the membrane. The protein is Putative membrane protein insertion efficiency factor of Anaeromyxobacter dehalogenans (strain 2CP-C).